The sequence spans 186 residues: Elongation factor P (186 aa).

Belongs to the elongation factor P family.

The protein localises to the cytoplasm. The protein operates within protein biosynthesis; polypeptide chain elongation. Its function is as follows. Involved in peptide bond synthesis. Stimulates efficient translation and peptide-bond synthesis on native or reconstituted 70S ribosomes in vitro. Probably functions indirectly by altering the affinity of the ribosome for aminoacyl-tRNA, thus increasing their reactivity as acceptors for peptidyl transferase. The chain is Elongation factor P from Elusimicrobium minutum (strain Pei191).